Here is a 411-residue protein sequence, read N- to C-terminus: LL-diaminopimelate aminotransferase (411 aa).

Residues tyrosine 15 and glycine 42 each contribute to the substrate site. Pyridoxal 5'-phosphate is bound by residues tyrosine 72, 108–109, tyrosine 132, asparagine 188, tyrosine 219, and 247–249; these read AK and SFS. Positions 109, 132, and 188 each coordinate substrate. Lysine 250 carries the post-translational modification N6-(pyridoxal phosphate)lysine. The pyridoxal 5'-phosphate site is built by arginine 258 and asparagine 293. Positions 293 and 389 each coordinate substrate.

This sequence belongs to the class-I pyridoxal-phosphate-dependent aminotransferase family. LL-diaminopimelate aminotransferase subfamily. Homodimer. Pyridoxal 5'-phosphate is required as a cofactor.

The catalysed reaction is (2S,6S)-2,6-diaminopimelate + 2-oxoglutarate = (S)-2,3,4,5-tetrahydrodipicolinate + L-glutamate + H2O + H(+). It participates in amino-acid biosynthesis; L-lysine biosynthesis via DAP pathway; LL-2,6-diaminopimelate from (S)-tetrahydrodipicolinate (aminotransferase route): step 1/1. Involved in the synthesis of meso-diaminopimelate (m-DAP or DL-DAP), required for both lysine and peptidoglycan biosynthesis. Catalyzes the direct conversion of tetrahydrodipicolinate to LL-diaminopimelate. Is also able to catalyze the reverse reaction in vitro, i.e. the transamination of LL-diaminopimelate with 2-oxoglutarate to produce tetrahydrodipicolinate and glutamate. Can also use m-DAP instead of LL-DAP as the amino-group donor, and oxaloacetate or pyruvate as the amino-group acceptor. This chain is LL-diaminopimelate aminotransferase, found in Desulfitobacterium hafniense (strain DSM 10664 / DCB-2).